Reading from the N-terminus, the 653-residue chain is MKRVGNCWKASVAAFFLLMFTAFAAADTTSVDTVSYKSNSEFFDGEVLQAGYVSNFATDKINVHLGASEIESKTGATAEEDLTLSVSHQNTYARYPLQETGLKKIYGWEGMKKTFDTKDQLWNWVTSNCADFTEGGVAIGDRTSKVEAAAKSWYDYWTGSYNYQAFCLRKNGYYGDVADIGSPDEIFRTEWRLQAGDKNPQTAIITNGDGGSGVVSNLGRYAKVKWQGNLDTGQNPPLVDDELAIHGNNYEGGWRVISEQRYDNYWNYIKNDGNRLLDKWKSGDYSESYIEGLLNGKAENAQKRYSESPLANAEVLDSSFQSGALKADMDSRLAYPEFNVYVDAGENGYITVSKPVGKPKIVSSSGASFGELSSGRISVDVKNVGGAEGSFSARAGSCSQYFQADALQNTKRVAPGETASYSFRVTFTSTSMQQASYTGRCSITVEDTGSGREVSTSVSVEATQQSECTQGKEIVKQKNGNDVIYSCPDGLKIQKQDTCTGELKAVFVNNDIQYDCREEGTGGGSGGGLFGKRFTLPITGTQLSNPLNAFENIWSGDANALNWLQVFVTFIAFLGGFALVGVKLGKIVDGLATEFIPVKDSHVRLVIGLLGGGMIATAVYQLVTDPLGLLVTVLGLVVMGYLYLSASAPEINL.

The N-terminal stretch at 1-24 (MKRVGNCWKASVAAFFLLMFTAFA) is a signal peptide. Over 25-559 (AADTTSVDTV…FENIWSGDAN (535 aa)) the chain is Extracellular. 4 cysteine pairs are disulfide-bonded: Cys129–Cys167, Cys398–Cys441, Cys468–Cys487, and Cys499–Cys516. Positions 155 to 160 (DYWTGS) are fusion loop. The helical transmembrane segment at 560–580 (ALNWLQVFVTFIAFLGGFALV) threads the bilayer. At 581–604 (GVKLGKIVDGLATEFIPVKDSHVR) the chain is on the cytoplasmic side. Transmembrane regions (helical) follow at residues 605–625 (LVIG…LVTD) and 626–646 (PLGL…YLSA). Residues 647–653 (SAPEINL) lie on the Cytoplasmic side of the membrane.

This sequence belongs to the HAP2/GCS1 family. Fusexin 1 subfamily. In terms of assembly, homotrimer stabilized by interdomain contacts and numerous Ca(2+) and Na(+) ions.

The protein localises to the cell surface. It localises to the cell membrane. Exhibits fusogenic activity. Mediates cell-cell fusion in mammalian cells (bilateral fusion). The protein is Fusexin 1 of Haloplanus natans (strain DSM 17983 / JCM 14081 / CGMCC 1.8972 / RE-101).